A 78-amino-acid chain; its full sequence is Large ribosomal subunit protein bL28 (78 aa).

Belongs to the bacterial ribosomal protein bL28 family.

This is Large ribosomal subunit protein bL28 from Hamiltonella defensa subsp. Acyrthosiphon pisum (strain 5AT).